A 378-amino-acid polypeptide reads, in one-letter code: Alanine racemase (378 aa).

K40 acts as the Proton acceptor; specific for D-alanine in catalysis. K40 is subject to N6-(pyridoxal phosphate)lysine. R140 is a substrate binding site. Y270 functions as the Proton acceptor; specific for L-alanine in the catalytic mechanism. M317 is a substrate binding site.

This sequence belongs to the alanine racemase family. Requires pyridoxal 5'-phosphate as cofactor.

It carries out the reaction L-alanine = D-alanine. The protein operates within amino-acid biosynthesis; D-alanine biosynthesis; D-alanine from L-alanine: step 1/1. In terms of biological role, catalyzes the interconversion of L-alanine and D-alanine. May also act on other amino acids. In Lacticaseibacillus casei (strain BL23) (Lactobacillus casei), this protein is Alanine racemase (alr).